The chain runs to 91 residues: Ice-structuring protein 2A7 (91 aa).

The signal sequence occupies residues Met1–Thr21. Positions Glu22–Asp39 are cleaved as a propeptide — removed by a dipeptidylpeptidase.

The protein belongs to the type-I AFP family. As to expression, detected in blood serum (at protein level).

The protein localises to the secreted. Its function is as follows. Contributes to protect fish blood from freezing at subzero sea water temperatures. Lowers the blood freezing point. Binds to nascent ice crystals and prevents further growth. In Pseudopleuronectes americanus (Winter flounder), this protein is Ice-structuring protein 2A7.